The following is a 202-amino-acid chain: Dephospho-CoA kinase (202 aa).

Residues 3–202 (IFGLTGGIGS…ISHRSKYLSC (200 aa)) form the DPCK domain. 11–16 (GSGKSL) contacts ATP.

This sequence belongs to the CoaE family.

It localises to the cytoplasm. It carries out the reaction 3'-dephospho-CoA + ATP = ADP + CoA + H(+). The protein operates within cofactor biosynthesis; coenzyme A biosynthesis; CoA from (R)-pantothenate: step 5/5. Its function is as follows. Catalyzes the phosphorylation of the 3'-hydroxyl group of dephosphocoenzyme A to form coenzyme A. This Ehrlichia chaffeensis (strain ATCC CRL-10679 / Arkansas) protein is Dephospho-CoA kinase.